A 265-amino-acid polypeptide reads, in one-letter code: 3-methyl-2-oxobutanoate hydroxymethyltransferase (265 aa).

Residues D43 and D82 each coordinate Mg(2+). 3-methyl-2-oxobutanoate is bound by residues 43-44 (DS), D82, and K111. E113 serves as a coordination point for Mg(2+). The active-site Proton acceptor is E180.

It belongs to the PanB family. In terms of assembly, homodecamer; pentamer of dimers. Mg(2+) serves as cofactor.

The protein localises to the cytoplasm. The catalysed reaction is 3-methyl-2-oxobutanoate + (6R)-5,10-methylene-5,6,7,8-tetrahydrofolate + H2O = 2-dehydropantoate + (6S)-5,6,7,8-tetrahydrofolate. It participates in cofactor biosynthesis; (R)-pantothenate biosynthesis; (R)-pantoate from 3-methyl-2-oxobutanoate: step 1/2. Catalyzes the reversible reaction in which hydroxymethyl group from 5,10-methylenetetrahydrofolate is transferred onto alpha-ketoisovalerate to form ketopantoate. This is 3-methyl-2-oxobutanoate hydroxymethyltransferase from Francisella tularensis subsp. mediasiatica (strain FSC147).